A 393-amino-acid polypeptide reads, in one-letter code: Lipid-A-disaccharide synthase (393 aa).

The protein belongs to the LpxB family.

The enzyme catalyses a lipid X + a UDP-2-N,3-O-bis[(3R)-3-hydroxyacyl]-alpha-D-glucosamine = a lipid A disaccharide + UDP + H(+). Its pathway is bacterial outer membrane biogenesis; LPS lipid A biosynthesis. Its function is as follows. Condensation of UDP-2,3-diacylglucosamine and 2,3-diacylglucosamine-1-phosphate to form lipid A disaccharide, a precursor of lipid A, a phosphorylated glycolipid that anchors the lipopolysaccharide to the outer membrane of the cell. The sequence is that of Lipid-A-disaccharide synthase from Actinobacillus pleuropneumoniae serotype 7 (strain AP76).